Here is a 1054-residue protein sequence, read N- to C-terminus: Cell wall acid trehalase ARB_03719 (1054 aa).

The N-terminal stretch at 1 to 24 (MKQPNINLAACILWLLSIITAVAA) is a signal peptide. N-linked (GlcNAc...) asparagine glycans are attached at residues asparagine 138, asparagine 178, asparagine 183, asparagine 207, asparagine 239, asparagine 277, and asparagine 309. 450–451 (WD) is a binding site for substrate. N-linked (GlcNAc...) asparagine glycosylation is found at asparagine 495, asparagine 515, asparagine 572, and asparagine 580. Residue glutamate 586 is the Proton donor of the active site. N-linked (GlcNAc...) asparagine glycans are attached at residues asparagine 620 and asparagine 648. Residue 654–655 (KQ) coordinates substrate. 2 N-linked (GlcNAc...) asparagine glycosylation sites follow: asparagine 808 and asparagine 844. Positions 950 to 974 (PLHPVTDPENGDASGSSPTTPASSV) are disordered. Low complexity predominate over residues 962-974 (ASGSSPTTPASSV). Asparagine 1004, asparagine 1007, and asparagine 1039 each carry an N-linked (GlcNAc...) asparagine glycan.

Belongs to the glycosyl hydrolase 65 family.

The protein resides in the secreted. The protein localises to the cell wall. The enzyme catalyses alpha,alpha-trehalose + H2O = alpha-D-glucose + beta-D-glucose. Functionally, cell wall acid trehalase that catalyzes hydrolysis of the disaccharide trehalose and required for growth on trehalose as carbon source. Plays a role in virulence. The protein is Cell wall acid trehalase ARB_03719 of Arthroderma benhamiae (strain ATCC MYA-4681 / CBS 112371) (Trichophyton mentagrophytes).